Reading from the N-terminus, the 607-residue chain is ATP-dependent zinc metalloprotease FtsH 2 (607 aa).

Residues methionine 1–arginine 2 are Cytoplasmic-facing. Residues serine 3 to alanine 23 traverse the membrane as a helical segment. At serine 24–glycine 99 the chain is on the periplasmic side. A helical membrane pass occupies residues leucine 100–alanine 120. At serine 121 to alanine 607 the chain is on the cytoplasmic side. Glycine 195–threonine 202 contributes to the ATP binding site. Histidine 418 serves as a coordination point for Zn(2+). Residue glutamate 419 is part of the active site. 2 residues coordinate Zn(2+): histidine 422 and aspartate 495.

This sequence in the central section; belongs to the AAA ATPase family. It in the C-terminal section; belongs to the peptidase M41 family. In terms of assembly, homohexamer. Requires Zn(2+) as cofactor.

It is found in the cell inner membrane. Acts as a processive, ATP-dependent zinc metallopeptidase for both cytoplasmic and membrane proteins. Plays a role in the quality control of integral membrane proteins. The chain is ATP-dependent zinc metalloprotease FtsH 2 from Sorangium cellulosum (strain So ce56) (Polyangium cellulosum (strain So ce56)).